A 318-amino-acid chain; its full sequence is Taste receptor type 2 member 7 (318 aa).

At 1–9 the chain is on the extracellular side; sequence MTDKVQTTL. The chain crosses the membrane as a helical span at residues 10–30; it reads LFLAVGEFSVGILGNAFIGLV. The Cytoplasmic portion of the chain corresponds to 31 to 55; sequence NCMDWIKKRKIASIDLILTSLAISR. The helical transmembrane segment at 56 to 76 threads the bilayer; it reads ICLLCVILLDCFILVLYPDVY. Topologically, residues 77 to 94 are extracellular; that stretch reads ATGKEMRIIDFFWILTNH. The helical transmembrane segment at 95–115 threads the bilayer; that stretch reads LSIWFATCLSIYYFFKIANFF. Residues 116–128 lie on the Cytoplasmic side of the membrane; it reads HPLFLWMKWRIDR. A helical membrane pass occupies residues 129–149; sequence VISWILLGCMVLSVFISLPAT. Over 150-187 the chain is Extracellular; sequence ENLNADFRFCVKAKRKTNLTWSCRVNKTQHASIKLLLN. N167 and N175 each carry an N-linked (GlcNAc...) asparagine glycan. The helical transmembrane segment at 188–208 threads the bilayer; sequence LATLLPFCVCLMSFFLLILSL. The Cytoplasmic portion of the chain corresponds to 209–235; sequence RRHIRRMQLSATGCRDPSTEAHVRALK. Residues 236-256 form a helical membrane-spanning segment; the sequence is AVISFLLLFIAYYLSFLIATS. Residues 257–266 are Extracellular-facing; sequence SYFMPETELA. Residues 267–287 form a helical membrane-spanning segment; sequence VIFGESIALIYPSSHSFILIL. Topologically, residues 288-318 are cytoplasmic; the sequence is GNNKLRHASLKVIWKVMSILKGRKFQQHKQI.

Belongs to the G-protein coupled receptor T2R family.

It localises to the membrane. Its function is as follows. Gustducin-coupled receptor implicated in the perception of bitter compounds in the oral cavity and the gastrointestinal tract. Signals through PLCB2 and the calcium-regulated cation channel TRPM5. The chain is Taste receptor type 2 member 7 (TAS2R7) from Pongo pygmaeus (Bornean orangutan).